Reading from the N-terminus, the 321-residue chain is Chloroplastic calcium uniporter protein (321 aa).

A chloroplast-targeting transit peptide spans 1–56 (MSSKKSLVQSLFNISKTYSRISGLTRMRPTKSGGIPPDAGDSGIRRRFLHKRAFFS). 2 consecutive transmembrane segments (helical) span residues 223–243 (LWAGLGLIMAQTVGFFRLTFW) and 249–269 (VMEPICFYVTSTYFMAGYAFF). Residues 247-255 (WDVMEPICF) carry the Selectivity filter motif. E251 serves as a coordination point for Ca(2+).

It belongs to the MCU (TC 1.A.77) family.

The protein localises to the plastid. It is found in the chloroplast membrane. It catalyses the reaction Ca(2+)(in) = Ca(2+)(out). Its function is as follows. Chloroplastic membrane calcium uniporter that mediates calcium uptake into chloroplast stroma. Constitutes a pore-forming and calcium-conducting subunit. Chloroplastic calcium homeostasis plays key roles in cellular physiology. Promotes calcium uptake into chloroplast stroma in response to osmotic-stress, fine-tuning cytosolic MAPK3/MAPK6 phosphorylation and affecting stomata opening. The sequence is that of Chloroplastic calcium uniporter protein from Arabidopsis thaliana (Mouse-ear cress).